The primary structure comprises 885 residues: Alpha-actinin (885 aa).

The tract at residues 1–242 (MTQDGYMQQE…IMTYVSWYYH (242 aa)) is actin-binding. Calponin-homology (CH) domains follow at residues 26-130 (KQQR…LRFA) and 139-245 (MTAK…HAFH). Spectrin repeat units follow at residues 270 to 377 (LMEE…EEWL), 389 to 494 (HLAQ…ALDE), 508 to 614 (EFAK…HTLQ), and 626 to 727 (LRRQ…NEVE). EF-hand domains follow at residues 741–776 (EQLNEFRTSFNHFDKKRTGRLAPEEFKSCLVSLGYN) and 780–815 (DDRPEFRRILAIVDPNKTGYVHFDAFLDFMTREYTD). 8 residues coordinate Ca(2+): Asp-754, Thr-758, Arg-760, Glu-765, Asp-793, Asn-795, Thr-797, and Tyr-799.

It belongs to the alpha-actinin family. In terms of assembly, homodimer; antiparallel.

Functionally, F-actin cross-linking protein which is thought to anchor actin to a variety of intracellular structures. This is a bundling protein. This Dermatophagoides farinae (American house dust mite) protein is Alpha-actinin.